We begin with the raw amino-acid sequence, 483 residues long: Glutamyl-tRNA(Gln) amidotransferase subunit A (483 aa).

Active-site charge relay system residues include Lys-76 and Ser-151. Ser-175 acts as the Acyl-ester intermediate in catalysis.

The protein belongs to the amidase family. GatA subfamily. In terms of assembly, heterotrimer of A, B and C subunits.

It catalyses the reaction L-glutamyl-tRNA(Gln) + L-glutamine + ATP + H2O = L-glutaminyl-tRNA(Gln) + L-glutamate + ADP + phosphate + H(+). Its function is as follows. Allows the formation of correctly charged Gln-tRNA(Gln) through the transamidation of misacylated Glu-tRNA(Gln) in organisms which lack glutaminyl-tRNA synthetase. The reaction takes place in the presence of glutamine and ATP through an activated gamma-phospho-Glu-tRNA(Gln). In Pseudomonas putida (strain GB-1), this protein is Glutamyl-tRNA(Gln) amidotransferase subunit A.